We begin with the raw amino-acid sequence, 466 residues long: Asparagine--tRNA ligase (466 aa).

Belongs to the class-II aminoacyl-tRNA synthetase family. As to quaternary structure, homodimer.

The protein localises to the cytoplasm. It carries out the reaction tRNA(Asn) + L-asparagine + ATP = L-asparaginyl-tRNA(Asn) + AMP + diphosphate + H(+). In Buchnera aphidicola subsp. Baizongia pistaciae (strain Bp), this protein is Asparagine--tRNA ligase.